Reading from the N-terminus, the 289-residue chain is Diaminopimelate epimerase (289 aa).

The substrate site is built by Asn-13, Gln-47, and Asn-67. Residue Cys-76 is the Proton donor of the active site. Residues 77–78, Asn-167, Asn-200, and 218–219 each bind substrate; these read GN and ER. The active-site Proton acceptor is Cys-227. Residue 228–229 participates in substrate binding; that stretch reads GT.

The protein belongs to the diaminopimelate epimerase family. In terms of assembly, homodimer.

The protein localises to the cytoplasm. The catalysed reaction is (2S,6S)-2,6-diaminopimelate = meso-2,6-diaminopimelate. Its pathway is amino-acid biosynthesis; L-lysine biosynthesis via DAP pathway; DL-2,6-diaminopimelate from LL-2,6-diaminopimelate: step 1/1. In terms of biological role, catalyzes the stereoinversion of LL-2,6-diaminopimelate (L,L-DAP) to meso-diaminopimelate (meso-DAP), a precursor of L-lysine and an essential component of the bacterial peptidoglycan. The chain is Diaminopimelate epimerase from Burkholderia ambifaria (strain ATCC BAA-244 / DSM 16087 / CCUG 44356 / LMG 19182 / AMMD) (Burkholderia cepacia (strain AMMD)).